Consider the following 156-residue polypeptide: Ribonuclease pancreatic (156 aa).

The signal sequence occupies residues 1 to 28 (MALEKSLVLLPLLVLILLVLGWVQPSLG). Residues 33 to 43 (AKKFQRQHVDS) are compositionally biased toward basic and acidic residues. Positions 33–53 (AKKFQRQHVDSDSSPSSSSTY) are disordered. Positions 35 and 38 each coordinate substrate. Histidine 40 (proton acceptor) is an active-site residue. 4 disulfides stabilise this stretch: cysteine 54-cysteine 112, cysteine 68-cysteine 123, cysteine 86-cysteine 138, and cysteine 93-cysteine 100. The N-linked (GlcNAc...) asparagine glycan is linked to asparagine 62. Substrate-binding positions include 69–73 (KPVNT) and lysine 94. A glycan (N-linked (GlcNAc...) asparagine) is linked at asparagine 104. Substrate is bound at residue arginine 113. An N-linked (GlcNAc...) asparagine glycan is attached at asparagine 116. Histidine 147 acts as the Proton donor in catalysis.

It belongs to the pancreatic ribonuclease family. Monomer. Interacts with and forms tight 1:1 complexes with RNH1. Dimerization of two such complexes may occur. Interaction with RNH1 inhibits this protein. Pancreas and other tissues and body fluids (indicating it may have other physiological functions besides its role in digestion).

The protein resides in the secreted. The enzyme catalyses an [RNA] containing cytidine + H2O = an [RNA]-3'-cytidine-3'-phosphate + a 5'-hydroxy-ribonucleotide-3'-[RNA].. The catalysed reaction is an [RNA] containing uridine + H2O = an [RNA]-3'-uridine-3'-phosphate + a 5'-hydroxy-ribonucleotide-3'-[RNA].. Functionally, endonuclease that catalyzes the cleavage of RNA on the 3' side of pyrimidine nucleotides. Acts on single-stranded and double-stranded RNA. This is Ribonuclease pancreatic (RNASE1) from Pan troglodytes (Chimpanzee).